The chain runs to 199 residues: ATP-dependent Clp protease proteolytic subunit (199 aa).

The active-site Nucleophile is Ser-97. His-122 is an active-site residue.

The protein belongs to the peptidase S14 family. In terms of assembly, fourteen ClpP subunits assemble into 2 heptameric rings which stack back to back to give a disk-like structure with a central cavity, resembling the structure of eukaryotic proteasomes.

It localises to the cytoplasm. The catalysed reaction is Hydrolysis of proteins to small peptides in the presence of ATP and magnesium. alpha-casein is the usual test substrate. In the absence of ATP, only oligopeptides shorter than five residues are hydrolyzed (such as succinyl-Leu-Tyr-|-NHMec, and Leu-Tyr-Leu-|-Tyr-Trp, in which cleavage of the -Tyr-|-Leu- and -Tyr-|-Trp bonds also occurs).. In terms of biological role, cleaves peptides in various proteins in a process that requires ATP hydrolysis. Has a chymotrypsin-like activity. Plays a major role in the degradation of misfolded proteins. The sequence is that of ATP-dependent Clp protease proteolytic subunit from Geotalea daltonii (strain DSM 22248 / JCM 15807 / FRC-32) (Geobacter daltonii).